The following is a 460-amino-acid chain: Transcription factor AP-2-beta (460 aa).

K21 participates in a covalent cross-link: Glycyl lysine isopeptide (Lys-Gly) (interchain with G-Cter in SUMO). A disordered region spans residues 30–139; the sequence is HDGVPSHSSR…PQLSGLDPRR (110 aa). A compositionally biased stretch (polar residues) spans 35-51; it reads SHSSRLSQLGSVSQGPY. The segment covering 121–132 has biased composition (low complexity); sequence LLPQPRAALPQL. Residue S258 is modified to Phosphoserine; by PKA. Residues 435-460 form a disordered region; sequence NTTTNRHTSGEGPGSKTGDKEEKHRK. Residues 451 to 460 are compositionally biased toward basic and acidic residues; it reads TGDKEEKHRK.

The protein belongs to the AP-2 family. In terms of assembly, binds DNA as a dimer. Can form homodimers or heterodimers with other AP-2 family members. Interacts with CITED4. Interacts with UBE2I. Interacts with KCTD1; this interaction represses transcription activation. Interacts with CITED2 (via C-terminus); the interaction stimulates TFAP2B-transcriptional activity. Post-translationally, sumoylated on Lys-21; which inhibits transcriptional activity.

Its subcellular location is the nucleus. Its function is as follows. Sequence-specific DNA-binding protein that interacts with inducible viral and cellular enhancer elements to regulate transcription of selected genes. AP-2 factors bind to the consensus sequence 5'-GCCNNNGGC-3' and activate genes involved in a large spectrum of important biological functions including proper eye, face, body wall, limb and neural tube development. They also suppress a number of genes including MCAM/MUC18, C/EBP alpha and MYC. AP-2-beta appears to be required for normal face and limb development and for proper terminal differentiation and function of renal tubular epithelia. In Canis lupus familiaris (Dog), this protein is Transcription factor AP-2-beta (TFAP2B).